A 236-amino-acid chain; its full sequence is Leucyl/phenylalanyl-tRNA--protein transferase (236 aa).

The protein belongs to the L/F-transferase family.

It localises to the cytoplasm. It catalyses the reaction N-terminal L-lysyl-[protein] + L-leucyl-tRNA(Leu) = N-terminal L-leucyl-L-lysyl-[protein] + tRNA(Leu) + H(+). The enzyme catalyses N-terminal L-arginyl-[protein] + L-leucyl-tRNA(Leu) = N-terminal L-leucyl-L-arginyl-[protein] + tRNA(Leu) + H(+). The catalysed reaction is L-phenylalanyl-tRNA(Phe) + an N-terminal L-alpha-aminoacyl-[protein] = an N-terminal L-phenylalanyl-L-alpha-aminoacyl-[protein] + tRNA(Phe). Functions in the N-end rule pathway of protein degradation where it conjugates Leu, Phe and, less efficiently, Met from aminoacyl-tRNAs to the N-termini of proteins containing an N-terminal arginine or lysine. The sequence is that of Leucyl/phenylalanyl-tRNA--protein transferase from Shewanella pealeana (strain ATCC 700345 / ANG-SQ1).